The sequence spans 89 residues: Small ribosomal subunit protein uS15 (89 aa).

It belongs to the universal ribosomal protein uS15 family. As to quaternary structure, part of the 30S ribosomal subunit. Forms a bridge to the 50S subunit in the 70S ribosome, contacting the 23S rRNA.

In terms of biological role, one of the primary rRNA binding proteins, it binds directly to 16S rRNA where it helps nucleate assembly of the platform of the 30S subunit by binding and bridging several RNA helices of the 16S rRNA. Forms an intersubunit bridge (bridge B4) with the 23S rRNA of the 50S subunit in the ribosome. This Bifidobacterium adolescentis (strain ATCC 15703 / DSM 20083 / NCTC 11814 / E194a) protein is Small ribosomal subunit protein uS15.